Reading from the N-terminus, the 483-residue chain is MQQTPLFKNHYFHQLPGFYTALQPTPLHGARLLYHSEGLASELGLSSDWFTPEQDDVWSGTRLLPGMEPLAQVYSGHQFGSWAGQLGDGRGILLGEQQLADGRSMDWHLKGAGLTPYSRMGDGRAVLRSAIREFLASEAMHHLGIPTTRALTIVTSQHPVQREQEEKGAMLLRVAESHVRFGHFEHFYYRREPEKVRQLVEYVIARHWPQWENDERRYELWFGDVVERTARLITHWQAVGFSHGVMNTDNMSILGLTIDYGPYGFLDAYQPDFICNHSDHRGRYAFDNQPAVGLWNLHRLGQALSGLMDTDTLERALARYEPALMQHYGTLMRAKLGLFTASPDDNDVLVGLLRLMQKEGSDYTRTFRLLADSEKQASRSPLRDEFIDRAAFDSWFATYRQRLMQEDQDDEERRRLMNATNPKYILRNYLAQMAIERAESDDTSALARLHQALCRPFDEQPDSHDLAALPPDWGKHLEISCSS.

ATP-binding residues include Gly87, Gly89, Arg90, Lys110, Asp122, Gly123, Arg173, and Arg180. Catalysis depends on Asp249, which acts as the Proton acceptor. Residues Asn250 and Asp259 each contribute to the Mg(2+) site. An ATP-binding site is contributed by Asp259.

It belongs to the SELO family. Mg(2+) serves as cofactor. The cofactor is Mn(2+).

The catalysed reaction is L-seryl-[protein] + ATP = 3-O-(5'-adenylyl)-L-seryl-[protein] + diphosphate. The enzyme catalyses L-threonyl-[protein] + ATP = 3-O-(5'-adenylyl)-L-threonyl-[protein] + diphosphate. It carries out the reaction L-tyrosyl-[protein] + ATP = O-(5'-adenylyl)-L-tyrosyl-[protein] + diphosphate. It catalyses the reaction L-histidyl-[protein] + UTP = N(tele)-(5'-uridylyl)-L-histidyl-[protein] + diphosphate. The catalysed reaction is L-seryl-[protein] + UTP = O-(5'-uridylyl)-L-seryl-[protein] + diphosphate. The enzyme catalyses L-tyrosyl-[protein] + UTP = O-(5'-uridylyl)-L-tyrosyl-[protein] + diphosphate. Nucleotidyltransferase involved in the post-translational modification of proteins. It can catalyze the addition of adenosine monophosphate (AMP) or uridine monophosphate (UMP) to a protein, resulting in modifications known as AMPylation and UMPylation. The sequence is that of Protein nucleotidyltransferase YdiU from Pectobacterium atrosepticum (strain SCRI 1043 / ATCC BAA-672) (Erwinia carotovora subsp. atroseptica).